Consider the following 510-residue polypeptide: Replication factor C large subunit (510 aa).

48 to 55 (GPPGTGKT) provides a ligand contact to ATP. A disordered region spans residues 459–510 (MESMLERKREESEVEEEAKEIEEAVEKAEEEEEREEKKKEGGGEQRTLDAFF). Residues 493-510 (EEKKKEGGGEQRTLDAFF) are compositionally biased toward basic and acidic residues.

It belongs to the activator 1 small subunits family. RfcL subfamily. In terms of assembly, heteromultimer composed of small subunits (RfcS) and large subunits (RfcL).

In terms of biological role, part of the RFC clamp loader complex which loads the PCNA sliding clamp onto DNA. In Methanopyrus kandleri (strain AV19 / DSM 6324 / JCM 9639 / NBRC 100938), this protein is Replication factor C large subunit.